We begin with the raw amino-acid sequence, 883 residues long: Valine--tRNA ligase (883 aa).

The 'HIGH' region signature appears at 51 to 61; the sequence is PNVTGKLHLGH. A 'KMSKS' region motif is present at residues 527-531; that stretch reads KMSKS. Residue K530 coordinates ATP. Positions 811 to 847 form a coiled coil; that stretch reads LEALIDLNVEIARLEKELEKWNKEVARVQGKLNNERF.

Belongs to the class-I aminoacyl-tRNA synthetase family. ValS type 1 subfamily. Monomer.

It localises to the cytoplasm. The catalysed reaction is tRNA(Val) + L-valine + ATP = L-valyl-tRNA(Val) + AMP + diphosphate. Its function is as follows. Catalyzes the attachment of valine to tRNA(Val). As ValRS can inadvertently accommodate and process structurally similar amino acids such as threonine, to avoid such errors, it has a 'posttransfer' editing activity that hydrolyzes mischarged Thr-tRNA(Val) in a tRNA-dependent manner. This Listeria monocytogenes serovar 1/2a (strain ATCC BAA-679 / EGD-e) protein is Valine--tRNA ligase.